A 258-amino-acid polypeptide reads, in one-letter code: Imidazole glycerol phosphate synthase subunit HisF (258 aa).

Catalysis depends on residues aspartate 11 and aspartate 130.

The protein belongs to the HisA/HisF family. Heterodimer of HisH and HisF.

It localises to the cytoplasm. The catalysed reaction is 5-[(5-phospho-1-deoxy-D-ribulos-1-ylimino)methylamino]-1-(5-phospho-beta-D-ribosyl)imidazole-4-carboxamide + L-glutamine = D-erythro-1-(imidazol-4-yl)glycerol 3-phosphate + 5-amino-1-(5-phospho-beta-D-ribosyl)imidazole-4-carboxamide + L-glutamate + H(+). It participates in amino-acid biosynthesis; L-histidine biosynthesis; L-histidine from 5-phospho-alpha-D-ribose 1-diphosphate: step 5/9. Its function is as follows. IGPS catalyzes the conversion of PRFAR and glutamine to IGP, AICAR and glutamate. The HisF subunit catalyzes the cyclization activity that produces IGP and AICAR from PRFAR using the ammonia provided by the HisH subunit. This chain is Imidazole glycerol phosphate synthase subunit HisF, found in Shigella sonnei (strain Ss046).